The following is a 511-amino-acid chain: GMP synthase [glutamine-hydrolyzing] (511 aa).

In terms of domain architecture, Glutamine amidotransferase type-1 spans 5-195 (LILVLDFGGQ…LYKICGCSGD (191 aa)). The Nucleophile role is filled by cysteine 82. Catalysis depends on residues histidine 169 and glutamate 171. The 191-residue stretch at 196 to 386 (WKMASFIEHS…LGIPEDIVMR (191 aa)) folds into the GMPS ATP-PPase domain. 223–229 (SGGVDSS) serves as a coordination point for ATP.

Homodimer.

The enzyme catalyses XMP + L-glutamine + ATP + H2O = GMP + L-glutamate + AMP + diphosphate + 2 H(+). Its pathway is purine metabolism; GMP biosynthesis; GMP from XMP (L-Gln route): step 1/1. In terms of biological role, catalyzes the synthesis of GMP from XMP. This Acetivibrio thermocellus (strain ATCC 27405 / DSM 1237 / JCM 9322 / NBRC 103400 / NCIMB 10682 / NRRL B-4536 / VPI 7372) (Clostridium thermocellum) protein is GMP synthase [glutamine-hydrolyzing].